The following is a 488-amino-acid chain: Inosine-5'-monophosphate dehydrogenase (488 aa).

2 CBS domains span residues 94-150 (IVSE…SKTV) and 154-215 (MTKK…CKDE). Residues Asp-249, 249 to 251 (DSS), and 299 to 301 (GIG) each bind NAD(+). K(+) is bound by residues Gly-301 and Gly-303. Position 304 (Ser-304) interacts with IMP. Cys-306 serves as a coordination point for K(+). The active-site Thioimidate intermediate is the Cys-306. IMP is bound by residues 339–341 (DGG), 362–363 (GS), and 386–390 (YRGMG). Arg-402 acts as the Proton acceptor in catalysis. Glu-416 serves as a coordination point for IMP. The K(+) site is built by Glu-470, Ser-471, and His-472.

It belongs to the IMPDH/GMPR family. In terms of assembly, homotetramer. It depends on K(+) as a cofactor.

The enzyme catalyses IMP + NAD(+) + H2O = XMP + NADH + H(+). The protein operates within purine metabolism; XMP biosynthesis via de novo pathway; XMP from IMP: step 1/1. Its activity is regulated as follows. Mycophenolic acid (MPA) is a non-competitive inhibitor that prevents formation of the closed enzyme conformation by binding to the same site as the amobile flap. In contrast, mizoribine monophosphate (MZP) is a competitive inhibitor that induces the closed conformation. MPA is a potent inhibitor of mammalian IMPDHs but a poor inhibitor of the bacterial enzymes. MZP is a more potent inhibitor of bacterial IMPDH. Its function is as follows. Catalyzes the conversion of inosine 5'-phosphate (IMP) to xanthosine 5'-phosphate (XMP), the first committed and rate-limiting step in the de novo synthesis of guanine nucleotides, and therefore plays an important role in the regulation of cell growth. The protein is Inosine-5'-monophosphate dehydrogenase of Haemophilus influenzae (strain ATCC 51907 / DSM 11121 / KW20 / Rd).